Reading from the N-terminus, the 65-residue chain is Large ribosomal subunit protein uL29 (65 aa).

The protein belongs to the universal ribosomal protein uL29 family.

The protein is Large ribosomal subunit protein uL29 of Buchnera aphidicola subsp. Cinara cedri (strain Cc).